A 587-amino-acid chain; its full sequence is Trihelix transcription factor GTL1 (587 aa).

Composition is skewed to gly residues over residues 1–10 (MEQGGGGGGN) and 41–54 (GGLGGGGGGGGGGS). Residues 1-63 (MEQGGGGGGN…SASSSSGNRW (63 aa)) form a disordered region. In terms of domain architecture, Myb-like 1 spans 55-119 (ASSSSGNRWP…KCKEKFENVQ (65 aa)). Residues 96-103 (SRKLLELG) carry the Nuclear localization signal 1 motif. Residues 173–194 (SSSPFPVFSQPQPQTQTQPPQT) show a composition bias toward low complexity. Positions 173–264 (SSSPFPVFSQ…RKRGNRGGGG (92 aa)) are disordered. Over residues 201–210 (PTPPPLPLPS) the composition is skewed to pro residues. The segment covering 221 to 232 (SSHSSSTASGMG) has biased composition (low complexity). A compositionally biased stretch (acidic residues) spans 233–242 (SDDDDDDMDV). A coiled-coil region spans residues 285 to 328 (QRSFLEALEKREQERLDREEAWKRQEMARLAREHEVMSQERAAS). The disordered stretch occupies residues 348–435 (QLPPSLSSQP…EQSSLPSSSR (88 aa)). Residues 356–366 (QPPPPYQPPPA) show a composition bias toward pro residues. Composition is skewed to low complexity over residues 379–395 (AQSQSQQPIMAIPQQQI) and 411–434 (QKQQQQPQQEMVMSSEQSSLPSSS). Residues 434–492 (SRWPKAEILALINLRSGMEPRYQDNVPKGLLWEEISTSMKRMGYNRNAKRCKEKWENIN) enclose the Myb-like 2 domain. Residues 472 to 479 (MKRMGYNR) carry the Nuclear localization signal 2 motif. Residues 530–587 (GGGSSTSGLPQDQKQSPVTAMKPPQEGLVNVQQTHGSASTEEEEPIEESPQGTEKKTL) form a disordered region. 2 stretches are compositionally biased toward polar residues: residues 538 to 547 (LPQDQKQSPV) and 559 to 568 (NVQQTHGSAS).

As to expression, mostly expressed in siliques, and, to a lower extent, in growing root hairs, leaves, stems, and flowers. Present in abaxial epidermal cells, predominantly in guard cells, pavement cells, and meristemoids.

The protein resides in the nucleus. Functionally, transcription repressor that binds specific DNA sequence such as GT3 box 5'-GGTAAA-3' in the SDD1 promoter. Negative regulator of water use efficiency (WUE) via the promotion of stomatal density and distribution by the transcription repression of SDD1. Regulates the expression of several cell cycle genes and endoreduplication, especially in trichomes where it prevents ploidy-dependent plant cell growth. Regulates negatively root hair growth by directly binding RSL4 promoter and repressing RSL4 expression. This chain is Trihelix transcription factor GTL1, found in Arabidopsis thaliana (Mouse-ear cress).